Consider the following 312-residue polypeptide: Aldehyde reductase YPR1 (312 aa).

The Proton donor role is filled by Tyr56. Position 112 (His112) interacts with substrate. 220 to 274 (SPFGSANAPLLKEQAIIDMAKKHGVEPAQLIISWSIQRGYVVLAKSVNPERIVSN) serves as a coordination point for NADP(+).

The protein belongs to the aldo/keto reductase family.

It is found in the cytoplasm. The catalysed reaction is a primary alcohol + NADP(+) = an aldehyde + NADPH + H(+). It carries out the reaction 2-methylbutan-1-ol + NADP(+) = 2-methylbutanal + NADPH + H(+). The enzyme catalyses hexan-1-ol + NADP(+) = hexanal + NADPH + H(+). Functionally, aldehyde reductase with broad substrate specificity, catalyzing the NADPH-dependent reduction of aldehydes into the corresponding alcohols. In vitro, displays high specific activity towards 2-methylbutanal (2-methylbutyraldehyde), as well as other aldehydes such as hexanal (a toxic lipid peroxidation product and phytoalexin), but exhibits extremely low activity as a glycerol dehydrogenase. Seems to contribute to 2-methylbutanal reduction in vivo, and may therefore play a role in isoleucine catabolism and fusel alcohol formation. This chain is Aldehyde reductase YPR1 (YPR1), found in Saccharomyces cerevisiae (strain ATCC 204508 / S288c) (Baker's yeast).